A 439-amino-acid polypeptide reads, in one-letter code: Protein translocase subunit SecY (439 aa).

Helical transmembrane passes span isoleucine 19–glycine 39, tyrosine 68–leucine 88, tyrosine 116–methionine 136, leucine 151–isoleucine 171, phenylalanine 176–isoleucine 196, tryptophan 216–valine 236, valine 269–leucine 289, tryptophan 312–valine 332, valine 373–glycine 393, and lysine 396–valine 416.

This sequence belongs to the SecY/SEC61-alpha family. In terms of assembly, component of the Sec protein translocase complex. Heterotrimer consisting of SecY, SecE and SecG subunits. The heterotrimers can form oligomers, although 1 heterotrimer is thought to be able to translocate proteins. Interacts with the ribosome. Interacts with SecDF, and other proteins may be involved. Interacts with SecA.

The protein localises to the cell membrane. The central subunit of the protein translocation channel SecYEG. Consists of two halves formed by TMs 1-5 and 6-10. These two domains form a lateral gate at the front which open onto the bilayer between TMs 2 and 7, and are clamped together by SecE at the back. The channel is closed by both a pore ring composed of hydrophobic SecY resides and a short helix (helix 2A) on the extracellular side of the membrane which forms a plug. The plug probably moves laterally to allow the channel to open. The ring and the pore may move independently. This Lactococcus lactis subsp. cremoris (Streptococcus cremoris) protein is Protein translocase subunit SecY.